The sequence spans 166 residues: Protein-export protein SecB (166 aa).

The protein belongs to the SecB family. Homotetramer, a dimer of dimers. One homotetramer interacts with 1 SecA dimer.

The protein resides in the cytoplasm. One of the proteins required for the normal export of preproteins out of the cell cytoplasm. It is a molecular chaperone that binds to a subset of precursor proteins, maintaining them in a translocation-competent state. It also specifically binds to its receptor SecA. The chain is Protein-export protein SecB from Actinobacillus pleuropneumoniae serotype 5b (strain L20).